We begin with the raw amino-acid sequence, 357 residues long: N-methyltransferase dtpB (357 aa).

Belongs to the methyltransferase superfamily.

It functions in the pathway alkaloid biosynthesis. N-methyltransferase; part of the gene cluster that mediates the biosynthesis of the dimeric diketopiperazine alkaloid ditryptophenaline. The nonribosomal peptide synthase dtpA accepts L-tryptophan and L-phenylalanine as its substrates and forms the phenylalanyl-tryptophanyl cyclic dipeptide product cyclophenylalanyltryptophenyl. The N-methyltransferase dtpB is responsible for the N-methylation of cyclophenylalanyltryptophenyl to yield cyclo-N-methylphenylalanyltryptophenyl. The cytochrome P450 monooxygenase is responsible not only for pyrroloindole ring formation but also for concurrent dimerization of N-methylphenylalanyltryptophanyl diketopiperazine monomers into a homodimeric product. The sequence is that of N-methyltransferase dtpB from Aspergillus flavus (strain ATCC 200026 / FGSC A1120 / IAM 13836 / NRRL 3357 / JCM 12722 / SRRC 167).